Reading from the N-terminus, the 420-residue chain is Serine hydroxymethyltransferase (420 aa).

(6S)-5,6,7,8-tetrahydrofolate is bound by residues Leu-121 and 125-127 (GHL). Position 229 is an N6-(pyridoxal phosphate)lysine (Lys-229).

Belongs to the SHMT family. As to quaternary structure, homodimer. Pyridoxal 5'-phosphate serves as cofactor.

The protein resides in the cytoplasm. It catalyses the reaction (6R)-5,10-methylene-5,6,7,8-tetrahydrofolate + glycine + H2O = (6S)-5,6,7,8-tetrahydrofolate + L-serine. The protein operates within one-carbon metabolism; tetrahydrofolate interconversion. It functions in the pathway amino-acid biosynthesis; glycine biosynthesis; glycine from L-serine: step 1/1. In terms of biological role, catalyzes the reversible interconversion of serine and glycine with tetrahydrofolate (THF) serving as the one-carbon carrier. This reaction serves as the major source of one-carbon groups required for the biosynthesis of purines, thymidylate, methionine, and other important biomolecules. Also exhibits THF-independent aldolase activity toward beta-hydroxyamino acids, producing glycine and aldehydes, via a retro-aldol mechanism. This chain is Serine hydroxymethyltransferase, found in Wigglesworthia glossinidia brevipalpis.